The following is a 450-amino-acid chain: UPF0210 protein MK1214 (450 aa).

The protein belongs to the UPF0210 family.

In Methanopyrus kandleri (strain AV19 / DSM 6324 / JCM 9639 / NBRC 100938), this protein is UPF0210 protein MK1214.